A 270-amino-acid chain; its full sequence is Acyl-[acyl-carrier-protein]--UDP-N-acetylglucosamine O-acyltransferase (270 aa).

Belongs to the transferase hexapeptide repeat family. LpxA subfamily. As to quaternary structure, homotrimer.

The protein resides in the cytoplasm. It catalyses the reaction a (3R)-hydroxyacyl-[ACP] + UDP-N-acetyl-alpha-D-glucosamine = a UDP-3-O-[(3R)-3-hydroxyacyl]-N-acetyl-alpha-D-glucosamine + holo-[ACP]. It functions in the pathway glycolipid biosynthesis; lipid IV(A) biosynthesis; lipid IV(A) from (3R)-3-hydroxytetradecanoyl-[acyl-carrier-protein] and UDP-N-acetyl-alpha-D-glucosamine: step 1/6. In terms of biological role, involved in the biosynthesis of lipid A, a phosphorylated glycolipid that anchors the lipopolysaccharide to the outer membrane of the cell. The sequence is that of Acyl-[acyl-carrier-protein]--UDP-N-acetylglucosamine O-acyltransferase from Helicobacter pylori (strain HPAG1).